We begin with the raw amino-acid sequence, 154 residues long: Vimentin (154 aa).

Residues 1–13 (MSTRSVSSSSYRR) are compositionally biased toward low complexity. Positions 1–31 (MSTRSVSSSSYRRMFGGPGTASRPSSTRSYV) are disordered. S2 is modified (N-acetylserine). Residues 2–95 (STRSVSSSSY…FSLADAINTE (94 aa)) form a head region. S5 is modified (phosphoserine). S7 carries the phosphoserine; by PKA and PKC; alternate modification. S7 carries an O-linked (GlcNAc) serine; alternate glycan. Residue S8 is modified to Phosphoserine. 2 positions are modified to phosphoserine; by PKC: S9 and S10. T20 carries the phosphothreonine modification. Position 25 is a phosphoserine; by PKA and PKC (S25). Position 26 is a phosphoserine; by PKC (S26). O-linked (GlcNAc) threonine glycosylation occurs at T33. S34 carries O-linked (GlcNAc) serine; alternate glycosylation. Position 34 is a phosphoserine; by PKC; alternate (S34). At S39 the chain carries Phosphoserine; by CaMK2, PKA, PKC and ROCK2. S42 carries the post-translational modification Phosphoserine; by PKC. Phosphoserine is present on S49. Y53 carries the post-translational modification Phosphotyrosine. Phosphoserine is present on S55. S56 carries the phosphoserine; by CDK5 and CDK1 modification. A Phosphotyrosine modification is found at Y61. Position 66 is a phosphoserine; by PKA and PKC (S66). Phosphoserine; by AURKB and ROCK2 is present on S72. A Phosphoserine; by CaMK2 modification is found at S83. At S87 the chain carries Phosphoserine. A coil 1A region spans residues 96 to 131 (FKNTRTNEKVELQELNDRFANYIDKVRFLEQQNKIL). The stretch at 96–131 (FKNTRTNEKVELQELNDRFANYIDKVRFLEQQNKIL) forms a coiled coil. An IF rod domain is found at 103-154 (EKVELQELNDRFANYIDKVRFLEQQNKILLAELEQLKGQGKSRLGHLYEEEM). A Glycyl lysine isopeptide (Lys-Gly) (interchain with G-Cter in SUMO2) cross-link involves residue K104. Y117 bears the Phosphotyrosine mark. N6-acetyllysine; alternate occurs at positions 120, 129, and 139. 2 positions are modified to N6-succinyllysine; alternate: K120 and K129. Glycyl lysine isopeptide (Lys-Gly) (interchain with G-Cter in SUMO2); alternate cross-links involve residues K120, K129, and K139. The tract at residues 132-153 (LAELEQLKGQGKSRLGHLYEEE) is linker 1. Residue S144 is modified to Phosphoserine. Residue M154 is a region of interest, coil 1B.

Belongs to the intermediate filament family. Homomer assembled from elementary dimers. Identified in complexes that contain VIM, EZR, AHNAK, BFSP1, BFSP2, ANK2, PLEC, PRX and spectrin. Interacts with BCAS3. Interacts with LGSN. Interacts with SYNM. Interacts (via rod region) with PLEC (via CH 1 domain). Interacts with STK33. Interacts with LARP6. Interacts with RAB8B. Interacts with TOR1A; the interaction associates TOR1A with the cytoskeleton. Interacts with TOR1AIP1. Interacts with TOR1AIP1. Interacts with DIAPH1. Interacts with EPPK1; interaction is dependent of higher-order structure of intermediate filament. Interacts with the non-receptor tyrosine kinase SRMS; the interaction leads to phosphorylation of VIM. Interacts with NOD2. Interacts (via head region) with CORO1C. Interacts with HDGF. Interacts with PRKCE (via phorbol-ester/DAG-type 2 domain). Interacts with BFSP2. Interacts with PPL. Interacts with PKP1 and PKP2. Interacts with SCRIB (via PDZ domains); the interaction protects SCRIB from proteasomal degradation and facilitates SCRIB localization to intermediate filaments, the interaction is reduced by cell contact inhibition. One of the most prominent phosphoproteins in various cells of mesenchymal origin. Phosphorylation is enhanced during cell division, at which time vimentin filaments are significantly reorganized. Phosphorylation by PKN1 inhibits the formation of filaments. Filament disassembly during mitosis is promoted by phosphorylation at Ser-55 as well as by nestin. Phosphorylated at Ser-56 by CDK5 during neutrophil secretion in the cytoplasm. Phosphorylated by STK33. Phosphorylated on tyrosine residues by SRMS.

The protein localises to the cytoplasm. It localises to the cytoskeleton. It is found in the nucleus matrix. The protein resides in the cell membrane. Its function is as follows. Vimentins are class-III intermediate filaments found in various non-epithelial cells, especially mesenchymal cells. Vimentin is attached to the nucleus, endoplasmic reticulum, and mitochondria, either laterally or terminally. Plays a role in cell directional movement, orientation, cell sheet organization and Golgi complex polarization at the cell migration front. Protects SCRIB from proteasomal degradation and facilitates its localization to intermediate filaments in a cell contact-mediated manner. Functionally, involved with LARP6 in the stabilization of type I collagen mRNAs for CO1A1 and CO1A2. The sequence is that of Vimentin (VIM) from Ovis aries (Sheep).